A 490-amino-acid chain; its full sequence is MARLSSLLSFSLALLIFLHGSTAQQFPNECQLDQLNALEPSHVLKAEAGRIEVWDHHAPQLRCSGVSFVRYIIESKGLYLPSFFSTAKLSFVAKGEGLMGRVVPGCAETFQDSSVFQPSGGSPSGEGQGQGQQGQGQGHQGQGQGQQGQQGQQGQQSQGQGFRDMHQKVEHIRTGDTIATHPGVAQWFYNDGNQPLVIVSVLDLASHQNQLDRNPRPFYLAGNNPQGQVWIEGREQQPQKNILNGFTPEVLAKAFKIDVRTAQQLQNQQDNRGNIIRVQGPFSVIRPPLRSQRPQETEVNGLEETICSARCTDNLDDPSNADVYKPQLGYISTLNSYDLPILRFLRLSALRGSIRQNAMVLPQWNANANAVLYVTDGEAHVQVVNDNGDRVFDGQVSQGQLLSIPQGFSVVKRATSEQFRWIEFKTNANAQINTLAGRTSVLRGLPLEVISNGYQISLEEARRVKFNTIETTLTHSSGPASYGGPRKADA.

A signal peptide spans 1 to 23; it reads MARLSSLLSFSLALLIFLHGSTA. Disulfide bonds link cysteine 30–cysteine 63 and cysteine 106–cysteine 307. Cupin type-1 domains lie at 35–263 and 313–462; these read LNAL…RTAQ and DNLD…EEAR. At threonine 109 the chain carries Phosphothreonine. The segment at 113 to 164 is disordered; that stretch reads SSVFQPSGGSPSGEGQGQGQQGQGQGHQGQGQGQQGQQGQQGQQSQGQGFRD. Residues 122–148 are compositionally biased toward gly residues; the sequence is SPSGEGQGQGQQGQGQGHQGQGQGQQG. The segment covering 149 to 161 has biased composition (low complexity); the sequence is QQGQQGQQSQGQG. At tyrosine 330 the chain carries Phosphotyrosine. Residue serine 332 is modified to Phosphoserine. Threonine 426 is subject to Phosphothreonine.

Belongs to the 11S seed storage protein (globulins) family. Hexamer; each subunit is composed of an acidic and a basic chain derived from a single precursor and linked by a disulfide bond.

Its function is as follows. This is a seed storage protein. In Brassica napus (Rape), this protein is Cruciferin BnC1 (BnC1).